The primary structure comprises 350 residues: tRNA uridine(34) hydroxylase (350 aa).

Positions 146–240 constitute a Rhodanese domain; that stretch reads DDPDAVFIDM…YARRAREQGL (95 aa). Cys-200 (cysteine persulfide intermediate) is an active-site residue. Positions 319-328 are enriched in basic and acidic residues; sequence RRRRAGRENG. Residues 319 to 350 form a disordered region; the sequence is RRRRAGRENGNKIFNKSRGRLNSKLSIPDPAE.

It belongs to the TrhO family.

The enzyme catalyses uridine(34) in tRNA + AH2 + O2 = 5-hydroxyuridine(34) in tRNA + A + H2O. Catalyzes oxygen-dependent 5-hydroxyuridine (ho5U) modification at position 34 in tRNAs. This Salmonella dublin (strain CT_02021853) protein is tRNA uridine(34) hydroxylase.